The chain runs to 179 residues: 3-hydroxyanthranilate 3,4-dioxygenase 2 (179 aa).

R44 contributes to the O2 binding site. Fe cation-binding residues include H48, E60, and H99. Residue E60 participates in substrate binding. R103 and E113 together coordinate substrate.

The protein belongs to the 3-HAO family. Requires Fe(2+) as cofactor.

It localises to the cytoplasm. It carries out the reaction 3-hydroxyanthranilate + O2 = (2Z,4Z)-2-amino-3-carboxymuconate 6-semialdehyde. The protein operates within cofactor biosynthesis; NAD(+) biosynthesis; quinolinate from L-kynurenine: step 3/3. In terms of biological role, catalyzes the oxidative ring opening of 3-hydroxyanthranilate to 2-amino-3-carboxymuconate semialdehyde, which spontaneously cyclizes to quinolinate. This is 3-hydroxyanthranilate 3,4-dioxygenase 2 (bna1-2) from Aspergillus oryzae (strain ATCC 42149 / RIB 40) (Yellow koji mold).